A 360-amino-acid chain; its full sequence is MKIGVIGGGQLGRMLALAGTPLGMNFAFLDPAPDACAASLGEHIRADYGDQEHLRQLADEVDLVTFEFESVPAETVAFLSQFVPVYPNAESLRIARDRWFEKSMFKDLGIPTPDFADVQSQADLDAAAAAIGLPAVLKTRTLGYDGKGQKVLRQPADVQGAFAELGSVPCILEGFVPFTGEVSLVAVRARDGETRFYPLVHNTHDSGILKLSVASSGHPLQALAEDYVGRVLARLDYVGVLAFEFFEVDGGLKANEIAPRVHNSGHWTIEGAECSQFENHLRAVAGLPLGSTAKVGESAMLNFIGAVPPVAQVVAVADCHLHHYGKAFKNGRKVGHATLRCADRATLQARIAEVEALIEA.

Residues arginine 98, lysine 138, 143-149 (GYDGKGQ), 173-176 (EGFV), glutamate 181, histidine 204, and 255-256 (NE) contribute to the ATP site. The region spanning 102 to 285 (KSMFKDLGIP…QFENHLRAVA (184 aa)) is the ATP-grasp domain.

This sequence belongs to the PurK/PurT family. In terms of assembly, homodimer.

The catalysed reaction is 5-amino-1-(5-phospho-beta-D-ribosyl)imidazole + hydrogencarbonate + ATP = 5-carboxyamino-1-(5-phospho-D-ribosyl)imidazole + ADP + phosphate + 2 H(+). It functions in the pathway purine metabolism; IMP biosynthesis via de novo pathway; 5-amino-1-(5-phospho-D-ribosyl)imidazole-4-carboxylate from 5-amino-1-(5-phospho-D-ribosyl)imidazole (N5-CAIR route): step 1/2. Its function is as follows. Catalyzes the ATP-dependent conversion of 5-aminoimidazole ribonucleotide (AIR) and HCO(3)(-) to N5-carboxyaminoimidazole ribonucleotide (N5-CAIR). In Pseudomonas aeruginosa (strain ATCC 15692 / DSM 22644 / CIP 104116 / JCM 14847 / LMG 12228 / 1C / PRS 101 / PAO1), this protein is N5-carboxyaminoimidazole ribonucleotide synthase.